The following is a 249-amino-acid chain: Ubiquinone biosynthesis O-methyltransferase (249 aa).

Residues arginine 44, glycine 75, aspartate 96, and methionine 138 each coordinate S-adenosyl-L-methionine.

This sequence belongs to the methyltransferase superfamily. UbiG/COQ3 family.

It carries out the reaction a 3-demethylubiquinol + S-adenosyl-L-methionine = a ubiquinol + S-adenosyl-L-homocysteine + H(+). The enzyme catalyses a 3-(all-trans-polyprenyl)benzene-1,2-diol + S-adenosyl-L-methionine = a 2-methoxy-6-(all-trans-polyprenyl)phenol + S-adenosyl-L-homocysteine + H(+). Its pathway is cofactor biosynthesis; ubiquinone biosynthesis. Its function is as follows. O-methyltransferase that catalyzes the 2 O-methylation steps in the ubiquinone biosynthetic pathway. The protein is Ubiquinone biosynthesis O-methyltransferase of Paramagnetospirillum magneticum (strain ATCC 700264 / AMB-1) (Magnetospirillum magneticum).